Here is a 147-residue protein sequence, read N- to C-terminus: MADFDAVLKCWGPVEADFNTVGGMVLARLFKDHPDTQKLFPKFAGIAAGDLAGNAAVAAHGGTVLKKLGELLKAKGNHAAIIKPLANSHATKHKIPINNFKLITEALVHVMQEKAGLDAAGQTALRNVMGIVIADLEANYKELGFTG.

Residues 2-141 (ADFDAVLKCW…VIADLEANYK (140 aa)) enclose the Globin domain. Histidine 60 is a nitrite binding site. Position 60 (histidine 60) interacts with O2. Histidine 89 contacts heme b.

Belongs to the globin family. Monomeric.

The protein localises to the cytoplasm. It localises to the sarcoplasm. It catalyses the reaction Fe(III)-heme b-[protein] + nitric oxide + H2O = Fe(II)-heme b-[protein] + nitrite + 2 H(+). The catalysed reaction is H2O2 + AH2 = A + 2 H2O. In terms of biological role, monomeric heme protein which primary function is to store oxygen and facilitate its diffusion within muscle tissues. Reversibly binds oxygen through a pentacoordinated heme iron and enables its timely and efficient release as needed during periods of heightened demand. Depending on the oxidative conditions of tissues and cells, and in addition to its ability to bind oxygen, it also has a nitrite reductase activity whereby it regulates the production of bioactive nitric oxide. Under stress conditions, like hypoxia and anoxia, it also protects cells against reactive oxygen species thanks to its pseudoperoxidase activity. This chain is Myoglobin (mb), found in Auxis rochei (Bullet tuna).